The sequence spans 567 residues: Phosphoglucomutase-like protein 5 (567 aa).

Residues 1 to 26 (MEGSPIPVLTVPTAPYEDQRPTGGGG) form a disordered region. Thr120 carries the phosphothreonine modification. Ser122 carries the post-translational modification Phosphoserine.

This sequence belongs to the phosphohexose mutase family. Interacts with DMD/dystrophin; the interaction is direct. Interacts with UTRN/utrophin.

The protein localises to the cell junction. It localises to the adherens junction. It is found in the cytoplasm. The protein resides in the cytoskeleton. Its subcellular location is the cell membrane. The protein localises to the sarcolemma. Functionally, component of adherens-type cell-cell and cell-matrix junctions. Has no phosphoglucomutase activity in vitro. In Mus musculus (Mouse), this protein is Phosphoglucomutase-like protein 5.